The sequence spans 171 residues: Transcription antitermination protein NusB (171 aa).

Belongs to the NusB family.

Functionally, involved in transcription antitermination. Required for transcription of ribosomal RNA (rRNA) genes. Binds specifically to the boxA antiterminator sequence of the ribosomal RNA (rrn) operons. The polypeptide is Transcription antitermination protein NusB (Brucella abortus (strain S19)).